The chain runs to 703 residues: MSDDWDETDAAPASDWNIESFGLPTSFGSTKKTCNTGNAFNDGEGGFDEGSQSNFDDPFRSGGGGFGGRGRGGPRACFKCGDEGHMARDCPSASDSRGNRTNNRRQDNWGGGSSSKPANGEPFGFGSAFGDNQESDPFGATESSGFGFGSGSGSRGGRRNDGGRGCFKCGEEGHMSRDCPSGGGRNKGCFKCGQEGHNARDCPNPGEGSEEKKPRAPLYIPADVNEDELFVMGIEAGSNFDAYANVPANVSGAEPIQPAAESFQSMNLRPLLLENIVKAGYGCPTPVQKYTIPNVMNGRDIMACAQTGSGKTAAFLLPMLHYILDNNCPSNAFEEPAQPTGLVICPTRELAIQIMREARKFSHSSVAKCCVAYGGAAGFHQLKTIHSGCHILVATPGRLLDFLEKGKIVFSSLKYLVLDEADRMLDMGFLSSIKTVINHKTMTPTAERITLMFSATFPHEIQELASAFLNNYLFVVVGTVGAANTDVKQEVLCVPKFEKKAKLVEMCEEILISADDEKILVFVEQKRVADFVGTYLCEKKFRATTMHGDRYQAQREQALSEFRTGVHNILVATAVTARGLDIKGIGVVVNYDLPKDIDEYVHRIGRTGRLGNRGLSISFYDDETDACLTKDLVKVLSEANQTIPDWLTQKANASGHAQTYHGSGLFASSDIRSKNGGGRGWEKNQASSFLGGPSESNVDEEWD.

3 disordered regions span residues 1–22, 35–73, and 88–167; these read MSDDWDETDAAPASDWNIESFG, NTGNAFNDGEGGFDEGSQSNFDDPFRSGGGGFGGRGRGG, and RDCP…RGCF. The segment covering 61–73 has biased composition (gly residues); it reads SGGGGFGGRGRGG. A CCHC-type 1 zinc finger spans residues 77 to 92; that stretch reads CFKCGDEGHMARDCPS. A compositionally biased stretch (gly residues) spans 146-155; sequence FGFGSGSGSR. 2 consecutive CCHC-type zinc fingers follow at residues 166 to 181 and 189 to 204; these read CFKCGEEGHMSRDCPS and CFKCGQEGHNARDCPN. The Q motif motif lies at 261–289; the sequence is ESFQSMNLRPLLLENIVKAGYGCPTPVQK. The Helicase ATP-binding domain occupies 292 to 475; it reads IPNVMNGRDI…SAFLNNYLFV (184 aa). 305-312 contacts ATP; it reads AQTGSGKT. The short motif at 419–422 is the DEAD box element; the sequence is DEAD. Residues 506–651 form the Helicase C-terminal domain; that stretch reads MCEEILISAD…TIPDWLTQKA (146 aa). Positions 676-703 are disordered; that stretch reads GGGRGWEKNQASSFLGGPSESNVDEEWD.

This sequence belongs to the DEAD box helicase family. DDX4/VASA subfamily. As to expression, expressed in ovaries and testis. Not expressed in somatic tissue of the ovaries including follicle cells, muscle and connective tissue.

It is found in the cytoplasm. The protein resides in the nucleus. Its subcellular location is the nucleolus. The enzyme catalyses ATP + H2O = ADP + phosphate + H(+). Involved in translational control mechanisms operating in early stages of oogenesis. Required maternally in many stages of oogenesis, including cystocyte differentiation, oocyte differentiation, and specification of anterior-posterior polarity in the developing cysts. Essential for the formation and/or structural integrity of perinuclear nuage particles during germ cell formation. The polypeptide is Probable ATP-dependent RNA helicase vasa-like (Penaeus vannamei (Whiteleg shrimp)).